The following is a 235-amino-acid chain: Glycerol-3-phosphate acyltransferase (235 aa).

A run of 6 helical transmembrane segments spans residues 4-24 (LIAILAISYLVGAIPTGIMAG), 56-76 (AVTLLDILKGIVAAVSIVAFF), 94-114 (LLAGMSAVIGHVFTVFAGFKG), 122-142 (AGMLIGIAPVSMLIVIGIFLL), 152-172 (VASILAAIAFPLIIAIRKYIF), and 191-211 (FHDSLDYHLMIFGLIVALAIL).

Belongs to the PlsY family. As to quaternary structure, probably interacts with PlsX.

The protein resides in the cell inner membrane. It catalyses the reaction an acyl phosphate + sn-glycerol 3-phosphate = a 1-acyl-sn-glycero-3-phosphate + phosphate. It participates in lipid metabolism; phospholipid metabolism. Its function is as follows. Catalyzes the transfer of an acyl group from acyl-phosphate (acyl-PO(4)) to glycerol-3-phosphate (G3P) to form lysophosphatidic acid (LPA). This enzyme utilizes acyl-phosphate as fatty acyl donor, but not acyl-CoA or acyl-ACP. The polypeptide is Glycerol-3-phosphate acyltransferase (Chlorobium phaeobacteroides (strain DSM 266 / SMG 266 / 2430)).